Consider the following 519-residue polypeptide: Circadian clock oscillator protein KaiC (519 aa).

In terms of domain architecture, KaiC 1 spans 1 to 247; the sequence is MTSAEMTSPN…TITDHGINIF (247 aa). ATP is bound by residues glycine 49, threonine 50, glycine 51, lysine 52, threonine 53, and leucine 54. Threonine 53 is a binding site for Mg(2+). Catalysis depends on glutamate 77, which acts as the Proton acceptor in CI (KaiC 1). Serine 89 contributes to the ATP binding site. Residues 115 to 122 are B-loop, required to bind KaiB and SasA; that stretch reads QEVVGGFD. Residues lysine 224, leucine 225, arginine 226, threonine 228, histidine 230, threonine 240, and aspartate 241 each coordinate ATP. The interval 248–260 is linker; sequence PLGAMRLTQRSSN. One can recognise a KaiC 2 domain in the interval 261 to 519; sequence VRVSSGVVRL…RGVQEKGPES (259 aa). Residues threonine 290, glycine 291, threonine 292, glycine 293, lysine 294, threonine 295, and leucine 296 each contribute to the ATP site. Threonine 295 lines the Mg(2+) pocket. Residue glutamate 318 participates in Mg(2+) binding. The Proton acceptor in CII (KaiC 2) role is filled by glutamate 318. ATP is bound at residue tryptophan 331. Phosphoserine; by autocatalysis is present on serine 431. Threonine 432 is subject to Phosphothreonine; by autocatalysis. Positions 451, 457, 458, 459, 461, 463, and 465 each coordinate ATP. Residues 488 to 497 form an A-loop, interacts with KaiA region; it reads RIISGSPTRI.

The protein belongs to the KaiC family. As to quaternary structure, homohexamer resembling 2 stacked donuts with a central pore nearly blocked on one side; hexamerization is dependent on ATP-binding. Binds 12 ATP; 6 between each subunit in both layers. KaiB only binds to phospho-Ser-431 KaiC (not doubly phosphorylated KaiC). Complex formation between KaiB and KaiC is regulated by the phosphorylation state of KaiC and by an ATP hydrolysis-driven conformation change in the CI ring of KaiC; complex formation is slow. Slow complex formation is crucial for the timing of the circadian period. KaiB switches to a thioredoxin-like form called KaiB(fs) when bound to KaiC. The KaiABC complex composition changes during the circadian cycle to control KaiC phosphorylation. Complexes KaiC(6), KaiA(2-4):KaiC(6), KaiB(6):KaiC(6) and KaiC(6):KaiB(6):KaiA(12) are among the most important forms, many form cooperatively. Interacts directly with KaiB and SasA. The CI domain binds to KaiB and SasA; as they have a similar fold they compete for the same site on CI. CikA interacts with this protein in the clock complex. Binds to the C-terminus of KaiA via a coiled-coil structure. Forms KaiC(6):KaiB(1) and KaiC(6):KaiB(6) complexes. It depends on Mg(2+) as a cofactor. Has a 4 step phosphorylation cycle; the autokinase acts first on Thr-432, then Ser-431. When Ser-431 is modified KaiC switches to an autophosphatase mode, acting first on phospho-Thr-432 then phospho-Ser-431. Phosphorylated and dephosphorylated on serine/threonine residues by autocatalysis. Unphosphorylated, mono- and di-phosphorylated forms exist. The phosphorylated form correlates with clock speed. The presence of KaiA increases phosphorylation and stabilizes these forms. Post-translationally, phosphorylated on serine and threonine residues by autocatalysis. Has a 4 step phosphorylation cycle; the autokinase acts first on Thr-432, then Ser-431. When Ser-431 is modified KaiC switches to an autophosphatase mode, acting first on phospho-Thr-432 then phospho-Ser-431.

It carries out the reaction L-seryl-[protein] + ATP = O-phospho-L-seryl-[protein] + ADP + H(+). It catalyses the reaction L-threonyl-[protein] + ATP = O-phospho-L-threonyl-[protein] + ADP + H(+). The catalysed reaction is ATP + H2O = ADP + phosphate + H(+). Interaction with KaiA stimulates autophosphorylation, KaiC interaction with KaiB sequesters KaiA, preventing it stimulating the KaiC kinase, leading to autodephosphorylation. A KaiA dimer is sufficient to enhance KaiC phosphorylation. Interaction of KaiA with the A-loop stimulates autokinase activity. In terms of biological role, the KaiABC oscillator complex constitutes the main circadian regulator in cyanobacteria. Complex composition changes during the circadian cycle to control KaiC phosphorylation; KaiA stimulates KaiC autophosphorylation, while KaiB sequesters KaiA, leading to KaiC autodephosphorylation. The Kai complex controls chromosome condensation, leading to a transcription accessible chromosome during the first half of the circadian cycle and a compact, less transcription-accessible chromosome during the latter half. Clock output pathways impact the RpaA transcriptional regulator. Circadian oscillations can be generated in vitro by incubating KaiA, KaiB and KaiC with 1 mM ATP. The cycle is self-sustainable for at least 3 cycles and resistant to temperature changes. Mutations in KaiC alone prolong or reduce the circadian rhythm. A very robust clock is reconstituted with KaiA, KaiB, KaiC, SasA, CikA and RpaA; output is measured by transcription from an appropriate reporter. The level of KaiC phosphorylation and KaiC ATPase activity represent the key features of the biochemical oscillator. KaiA homodimer binding to the KaiC CII domain stimulates KaiC's ATPase activity and forms KaiA(2-4):KaiC(6) complexes, which stimulate KaiC autophosphorylation first on Thr-432 then Ser-431. Phospho-Ser-431-KaiC accumulation triggers binding of KaiB to CI to form the KaiB(6):KaiC(6) complex, leading to changes in the output regulators CikA and SasA. KaiB(6):KaiC(6) formation exposes a site for KaiA binding that sequesters KaiA from the CII domain, making the KaiC(6):KaiB(6):KaiA(12) complex that results in KaiC autodephosphorylation. Complete dephosphorylation of KaiC leads to dissociation of KaiA(2):KaiB(1), completing 1 cycle of the Kai oscillator. Functionally, has a weak, temperature-independent ATPase activity (about 15 molecules of ATP per day); the addition of KaiA and KaiB increases activity slightly and makes the activity oscillate with a circadian period in vitro for over 60 hours. ATPase activity defines the circadian period. The phosphorylation state of KaiC modulates its ATPase activity and effects KaiB binding. Its function is as follows. There are several clock output pathways; SasA/RpaA, CikA/RpaA and LabA. KaiC enhances the autophosphorylation activity of SasA, which then transfers its phosphate group to RpaA to activate it. Phosphotransfer is maximal when KaiC phosphorylation is active during the circadian cycle. KaiB and KaiC together enhance the phosphatase activity of CikA on phospho-RpaA. In terms of biological role, kaiC is important for metabolic partitioning during the dark to light shift, modulating the balance between the Calvin cycle and oxidative pentose phosphate pathway under natural growth conditions. The chain is Circadian clock oscillator protein KaiC from Synechococcus elongatus (strain ATCC 33912 / PCC 7942 / FACHB-805) (Anacystis nidulans R2).